A 436-amino-acid chain; its full sequence is UPF0597 protein YhaM (436 aa).

This sequence belongs to the UPF0597 family.

This is UPF0597 protein YhaM from Shigella flexneri serotype 5b (strain 8401).